The primary structure comprises 516 residues: Lysophosphatidylcholine acyltransferase 2B (516 aa).

N-linked (GlcNAc...) asparagine glycosylation occurs at N28. 3 consecutive transmembrane segments (helical) span residues 44–64 (THLS…LVPV), 68–88 (CIVF…INLP), and 102–122 (LIKS…GFLV). The short motif at 142 to 147 (HSTFFD) is the HXXXXD motif element. 2 consecutive EF-hand domains span residues 387 to 422 (PISE…LCNP) and 424 to 459 (NTEK…AFGV). Residues D400, N402, D404, T406, E411, D437, D439, D441, Y443, and E448 each contribute to the Ca(2+) site.

Belongs to the 1-acyl-sn-glycerol-3-phosphate acyltransferase family.

It localises to the membrane. The protein operates within lipid metabolism; phospholipid metabolism. Functionally, probable acetyltransferase. The chain is Lysophosphatidylcholine acyltransferase 2B (Lpcat2b) from Mus musculus (Mouse).